The primary structure comprises 101 residues: Ascorbate-specific PTS system EIIB component (101 aa).

The 94-residue stretch at 3-96 folds into the PTS EIIB type-2 domain; it reads VRILAVCGNG…KLLEVIKEHF (94 aa). The Phosphocysteine intermediate role is filled by C9. C9 is subject to Phosphocysteine.

It is found in the cytoplasm. The enzyme catalyses N(pros)-phospho-L-histidyl-[protein] + L-ascorbate(out) = L-ascorbate 6-phosphate(in) + L-histidyl-[protein]. The phosphoenolpyruvate-dependent sugar phosphotransferase system (sugar PTS), a major carbohydrate active transport system, catalyzes the phosphorylation of incoming sugar substrates concomitantly with their translocation across the cell membrane. The enzyme II UlaABC PTS system is involved in ascorbate transport. The protein is Ascorbate-specific PTS system EIIB component (ulaB) of Salmonella choleraesuis (strain SC-B67).